A 426-amino-acid polypeptide reads, in one-letter code: 3-phosphoshikimate 1-carboxyvinyltransferase (426 aa).

Positions 22, 23, and 27 each coordinate 3-phosphoshikimate. A phosphoenolpyruvate-binding site is contributed by Lys-22. Phosphoenolpyruvate is bound by residues Gly-96 and Arg-124. The 3-phosphoshikimate site is built by Ser-170, Ser-171, Gln-172, Ser-198, Asp-314, Asn-337, and Lys-341. Gln-172 provides a ligand contact to phosphoenolpyruvate. Asp-314 acts as the Proton acceptor in catalysis. Phosphoenolpyruvate-binding residues include Arg-345, Arg-387, and Lys-412.

Belongs to the EPSP synthase family. In terms of assembly, monomer.

The protein resides in the cytoplasm. The catalysed reaction is 3-phosphoshikimate + phosphoenolpyruvate = 5-O-(1-carboxyvinyl)-3-phosphoshikimate + phosphate. The protein operates within metabolic intermediate biosynthesis; chorismate biosynthesis; chorismate from D-erythrose 4-phosphate and phosphoenolpyruvate: step 6/7. Functionally, catalyzes the transfer of the enolpyruvyl moiety of phosphoenolpyruvate (PEP) to the 5-hydroxyl of shikimate-3-phosphate (S3P) to produce enolpyruvyl shikimate-3-phosphate and inorganic phosphate. The protein is 3-phosphoshikimate 1-carboxyvinyltransferase of Shewanella pealeana (strain ATCC 700345 / ANG-SQ1).